Reading from the N-terminus, the 62-residue chain is Protein YnfQ (62 aa).

This sequence belongs to the YmcF/YnqF peptide family.

The chain is Protein YnfQ from Escherichia coli (strain K12).